Consider the following 153-residue polypeptide: 3-hydroxyacyl-[acyl-carrier-protein] dehydratase FabZ (153 aa).

His-47 is an active-site residue.

The protein belongs to the thioester dehydratase family. FabZ subfamily.

It localises to the cytoplasm. It catalyses the reaction a (3R)-hydroxyacyl-[ACP] = a (2E)-enoyl-[ACP] + H2O. In terms of biological role, involved in unsaturated fatty acids biosynthesis. Catalyzes the dehydration of short chain beta-hydroxyacyl-ACPs and long chain saturated and unsaturated beta-hydroxyacyl-ACPs. The polypeptide is 3-hydroxyacyl-[acyl-carrier-protein] dehydratase FabZ (Dichelobacter nodosus (strain VCS1703A)).